The sequence spans 338 residues: Nickel transporter NixA (338 aa).

Helical transmembrane passes span 11 to 31, 37 to 57, 79 to 99, 127 to 147, 187 to 207, 217 to 237, 266 to 286, and 307 to 327; these read WLPY…FLWI, HILF…AFDA, GVGF…AVFL, FFLV…INLF, VLPL…IALL, AISF…MSLL, ITAI…LQIL, and YLGY…SLIW.

It belongs to the NiCoT transporter (TC 2.A.52) family.

It localises to the cell membrane. Functionally, secondary nickel transporter. Required for full urease activity. The sequence is that of Nickel transporter NixA from Staphylococcus aureus (strain NCTC 8325 / PS 47).